The primary structure comprises 309 residues: Metaxin-3 (309 aa).

The segment at 274–309 (MDDNLRRSPQNRPQKLSTLKPVGGAENSHSSDLLSH) is disordered. Composition is skewed to polar residues over residues 280–290 (RSPQNRPQKLS) and 300–309 (NSHSSDLLSH).

It belongs to the metaxin family. In terms of assembly, part of a large protein complex spanning both mitochondrial membranes termed the mitochondrial intermembrane space bridging (MIB) complex.

The protein resides in the mitochondrion. The protein localises to the mitochondrion outer membrane. Could function in transport of proteins into the mitochondrion. The chain is Metaxin-3 (mtx3) from Xenopus laevis (African clawed frog).